A 169-amino-acid chain; its full sequence is Lipoprotein signal peptidase (169 aa).

4 helical membrane passes run 4–24 (PICS…IVDL), 42–62 (LIPF…SFLA), 70–90 (WFFA…MYRS), and 102–122 (ALII…GAVI). Residues Asp123 and Asp141 contribute to the active site. Residues 137-157 (FNIADTAICIGAALVIFEGFI) form a helical membrane-spanning segment.

Belongs to the peptidase A8 family.

Its subcellular location is the cell inner membrane. The catalysed reaction is Release of signal peptides from bacterial membrane prolipoproteins. Hydrolyzes -Xaa-Yaa-Zaa-|-(S,diacylglyceryl)Cys-, in which Xaa is hydrophobic (preferably Leu), and Yaa (Ala or Ser) and Zaa (Gly or Ala) have small, neutral side chains.. It participates in protein modification; lipoprotein biosynthesis (signal peptide cleavage). Functionally, this protein specifically catalyzes the removal of signal peptides from prolipoproteins. This chain is Lipoprotein signal peptidase, found in Yersinia enterocolitica serotype O:8 / biotype 1B (strain NCTC 13174 / 8081).